Here is a 196-residue protein sequence, read N- to C-terminus: Acyl-homoserine-lactone synthase (196 aa).

Belongs to the autoinducer synthase family.

It carries out the reaction a fatty acyl-[ACP] + S-adenosyl-L-methionine = an N-acyl-L-homoserine lactone + S-methyl-5'-thioadenosine + holo-[ACP] + H(+). In terms of biological role, required for the synthesis of a yet unknown N-aceyl-homoserine lactone (N-aceyl-HSL), an autoinducer molecule which binds to PhzR and thus regulates phenazine production. The protein is Acyl-homoserine-lactone synthase (phzI) of Pseudomonas chlororaphis (Pseudomonas aureofaciens).